The chain runs to 336 residues: Galactinol synthase 6 (336 aa).

Lys-106 is a catalytic residue. Residues Asp-122, Asp-124, and His-260 each contribute to the Mn(2+) site.

Belongs to the glycosyltransferase 8 family. Galactosyltransferase subfamily. A divalent metal cation is required as a cofactor.

It localises to the cytoplasm. It carries out the reaction myo-inositol + UDP-alpha-D-galactose = alpha-D-galactosyl-(1-&gt;3)-1D-myo-inositol + UDP + H(+). Functionally, galactinol synthase involved in the biosynthesis of raffinose family oligosaccharides (RFOs) that function as osmoprotectants. May promote plant stress tolerance. The chain is Galactinol synthase 6 (GOLS6) from Arabidopsis thaliana (Mouse-ear cress).